The primary structure comprises 79 residues: MKVFFILIIFSFTLATCQGECYGSVPLPIDGEDVPLRTCVDTHDGQKHLIVSTWKTANSFSCECTQIGLQCCQKYVAVA.

The N-terminal stretch at 1–19 is a signal peptide; it reads MKVFFILIIFSFTLATCQG. Cystine bridges form between Cys21/Cys72, Cys39/Cys64, and Cys62/Cys71.

The protein resides in the secreted. In terms of biological role, shows an slight inhibitory effect toward the metalloproteinase brevilysin H6, but does not inhibit the metalloproteinases thermolysin, HR1A and HR1B. The chain is Small serum protein 3 from Protobothrops flavoviridis (Habu).